The primary structure comprises 255 residues: ATP synthase subunit a (255 aa).

Residues 1-7 constitute a propeptide, removed in mature form; that stretch reads MMFNNII. Helical transmembrane passes span 35–55, 91–111, 120–140, 147–167, 177–197, and 208–228; these read FGFYIIISTIIILTLHLLITY, YFPFIYGLFIFILMNNLLGLI, HFILTFFISFTVVLGATILGF, FFSLFVPSGCPLGLLPLLVLI, VSLGLRLSANILSGHMLLVIL, and GIFYFLIGLIPLAFIFAFSGL.

This sequence belongs to the ATPase A chain family. F-type ATPases have 2 components, CF(1) - the catalytic core - and CF(0) - the membrane proton channel. CF(1) has five subunits: alpha(3), beta(3), gamma(1), delta(1), epsilon(1). CF(0) has three main subunits: a, b and c.

It is found in the mitochondrion inner membrane. Its function is as follows. Mitochondrial membrane ATP synthase (F(1)F(0) ATP synthase or Complex V) produces ATP from ADP in the presence of a proton gradient across the membrane which is generated by electron transport complexes of the respiratory chain. F-type ATPases consist of two structural domains, F(1) - containing the extramembraneous catalytic core and F(0) - containing the membrane proton channel, linked together by a central stalk and a peripheral stalk. During catalysis, ATP synthesis in the catalytic domain of F(1) is coupled via a rotary mechanism of the central stalk subunits to proton translocation. Key component of the proton channel; it may play a direct role in the translocation of protons across the membrane. This is ATP synthase subunit a (ATP6) from Trichophyton rubrum (Athlete's foot fungus).